A 48-amino-acid chain; its full sequence is Putative protein P' (48 aa).

In Bos taurus (Bovine), this protein is Putative protein P'.